The sequence spans 210 residues: Large ribosomal subunit protein uL3 (210 aa).

A disordered region spans residues 125 to 151 (HGFGGGPRTHGQSDRLRAPGSIGAGTD).

This sequence belongs to the universal ribosomal protein uL3 family. As to quaternary structure, part of the 50S ribosomal subunit. Forms a cluster with proteins L14 and L19.

One of the primary rRNA binding proteins, it binds directly near the 3'-end of the 23S rRNA, where it nucleates assembly of the 50S subunit. This Roseiflexus sp. (strain RS-1) protein is Large ribosomal subunit protein uL3.